Here is a 330-residue protein sequence, read N- to C-terminus: tRNA (guanine-N(7)-)-methyltransferase (330 aa).

The tract at residues 1–27 (MSTPPAKRQKRDQYRKRAAAAANEDTG) is disordered. Residues 7-18 (KRQKRDQYRKRA) show a composition bias toward basic residues. S-adenosyl-L-methionine-binding positions include Gly95 and 118 to 119 (EI). Positions 138–185 (QNQLKNSSTTASESPAPAIPAEPATDGASPDAASTPETSNSPVPGGYQ) are disordered. A compositionally biased stretch (low complexity) spans 144-162 (SSTTASESPAPAIPAEPAT). Polar residues predominate over residues 172–185 (TPETSNSPVPGGYQ). Residues 193–194 (NT) and Cys213 each bind S-adenosyl-L-methionine. The active site involves Asp216. 302–304 (TEE) is an S-adenosyl-L-methionine binding site.

This sequence belongs to the class I-like SAM-binding methyltransferase superfamily. TrmB family. Forms a complex with trm82.

Its subcellular location is the nucleus. The enzyme catalyses guanosine(46) in tRNA + S-adenosyl-L-methionine = N(7)-methylguanosine(46) in tRNA + S-adenosyl-L-homocysteine. It participates in tRNA modification; N(7)-methylguanine-tRNA biosynthesis. Catalyzes the formation of N(7)-methylguanine at position 46 (m7G46) in tRNA. The chain is tRNA (guanine-N(7)-)-methyltransferase (trm8) from Aspergillus oryzae (strain ATCC 42149 / RIB 40) (Yellow koji mold).